We begin with the raw amino-acid sequence, 159 residues long: MVSERSSKEKKRSRARSEDSSSSDYEEKVKRHRGTEKDDERRSRRSDKKDKKSHKHHKSSTSKKSKDDKPKKKHTESDHKLKEGIPELSMEDYFSKNNEFATWLKEEKRTYFNDLTTEAARGLFSRFVKRWNRGKLESRYYEGISTAPRTAHDWMIKRR.

The segment at 1 to 86 (MVSERSSKEK…SDHKLKEGIP (86 aa)) is disordered. The segment covering 15–50 (ARSEDSSSSDYEEKVKRHRGTEKDDERRSRRSDKKD) has biased composition (basic and acidic residues). Positions 51–63 (KKSHKHHKSSTSK) are enriched in basic residues. Basic and acidic residues predominate over residues 64 to 85 (KSKDDKPKKKHTESDHKLKEGI).

The protein localises to the nucleus. Functionally, component of the auxin signaling transduction pathway that regulates cell proliferation and differentiation during flowers stigmas and styles development. Involved in the regulation of auxin-related genes. This is Style cell-cycle inhibitor 1 from Arabidopsis thaliana (Mouse-ear cress).